A 294-amino-acid chain; its full sequence is Small ribosomal subunit protein uS2 (294 aa).

Basic and acidic residues predominate over residues 256–274 (SGKFIMDEDPDSKKTKTAE). Residues 256–294 (SGKFIMDEDPDSKKTKTAEEPSATIEPSTTTTVEVDQNE) are disordered. Residues 280–294 (IEPSTTTTVEVDQNE) are compositionally biased toward polar residues.

This sequence belongs to the universal ribosomal protein uS2 family.

This is Small ribosomal subunit protein uS2 from Leptospira interrogans serogroup Icterohaemorrhagiae serovar Lai (strain 56601).